The primary structure comprises 192 residues: Pupal cuticle protein (192 aa).

An N-terminal signal peptide occupies residues 1-15; it reads MHLLMSLFGVLAVMQ. The 62-residue stretch at 45–106 folds into the Chitin-binding type R&amp;R domain; the sequence is DGNYRYAYET…PVGDHIPKVP (62 aa). A compositionally biased stretch (polar residues) spans 149–163; the sequence is QDQTTPRSRPSSTPK. A disordered region spans residues 149-192; the sequence is QDQTTPRSRPSSTPKTIYLTHPPTLSDAPTRRPLRQRQNDSRRR.

Functionally, component of the cuticle of the pupa of fruit fly. This Drosophila pseudoobscura pseudoobscura (Fruit fly) protein is Pupal cuticle protein (Pcp).